The following is a 480-amino-acid chain: Aspartyl/glutamyl-tRNA(Asn/Gln) amidotransferase subunit B (480 aa).

Belongs to the GatB/GatE family. GatB subfamily. Heterotrimer of A, B and C subunits.

It carries out the reaction L-glutamyl-tRNA(Gln) + L-glutamine + ATP + H2O = L-glutaminyl-tRNA(Gln) + L-glutamate + ADP + phosphate + H(+). The enzyme catalyses L-aspartyl-tRNA(Asn) + L-glutamine + ATP + H2O = L-asparaginyl-tRNA(Asn) + L-glutamate + ADP + phosphate + 2 H(+). Functionally, allows the formation of correctly charged Asn-tRNA(Asn) or Gln-tRNA(Gln) through the transamidation of misacylated Asp-tRNA(Asn) or Glu-tRNA(Gln) in organisms which lack either or both of asparaginyl-tRNA or glutaminyl-tRNA synthetases. The reaction takes place in the presence of glutamine and ATP through an activated phospho-Asp-tRNA(Asn) or phospho-Glu-tRNA(Gln). This Caldicellulosiruptor bescii (strain ATCC BAA-1888 / DSM 6725 / KCTC 15123 / Z-1320) (Anaerocellum thermophilum) protein is Aspartyl/glutamyl-tRNA(Asn/Gln) amidotransferase subunit B.